The chain runs to 548 residues: Alpha-1,3-mannosyl-glycoprotein 4-beta-N-acetylglucosaminyltransferase B (548 aa).

Over 1–7 (MRLRNGT) the chain is Cytoplasmic. A helical; Signal-anchor for type II membrane protein membrane pass occupies residues 8–28 (FLTLLLFCLCAFLSLSWYAAL). The Lumenal portion of the chain corresponds to 29–548 (SGQKGDVVDV…LSEIFLKKAD (520 aa)). A coiled-coil region spans residues 36-83 (VDVYQREFLALRDRLHAAEQESLKRSKELNLVLDEIKRAVSERQALRD). Asn-87 and Asn-103 each carry an N-linked (GlcNAc...) asparagine glycan.

It belongs to the glycosyltransferase 54 family. As to quaternary structure, interacts with SLC35A3. It depends on a divalent metal cation as a cofactor. N-glycosylated. Widely expressed. Strongly overexpressed in pancreatic cancer.

The protein resides in the golgi apparatus membrane. The catalysed reaction is an N(4)-{beta-D-GlcNAc-(1-&gt;2)-alpha-D-Man-(1-&gt;3)-[alpha-D-Man-(1-&gt;6)]-beta-D-Man-(1-&gt;4)-beta-D-GlcNAc-(1-&gt;4)-beta-D-GlcNAc}-L-asparaginyl-[protein] + UDP-N-acetyl-alpha-D-glucosamine = an N(4)-{beta-D-GlcNAc-(1-&gt;2)-[beta-D-GlcNAc-(1-&gt;4)]-alpha-D-Man-(1-&gt;3)-[alpha-D-Man-(1-&gt;6)]-beta-D-Man-(1-&gt;4)-beta-D-GlcNAc-(1-&gt;4)-beta-D-GlcNAc}-L-asparaginyl-[protein] + UDP + H(+). It catalyses the reaction N(4)-{beta-D-GlcNAc-(1-&gt;2)-alpha-D-Man-(1-&gt;3)-[beta-D-GlcNAc-(1-&gt;2)-alpha-D-Man-(1-&gt;6)]-beta-D-Man-(1-&gt;4)-beta-D-GlcNAc-(1-&gt;4)-beta-D-GlcNAc}-L-asparaginyl-[protein] + UDP-N-acetyl-alpha-D-glucosamine = N(4)-{beta-D-GlcNAc-(1-&gt;2)-[beta-D-GlcNAc-(1-&gt;4)]-alpha-D-Man-(1-&gt;3)-[beta-D-GlcNAc-(1-&gt;2)-alpha-D-Man-(1-&gt;6)]-beta-D-Man-(1-&gt;4)-beta-D-GlcNAc-(1-&gt;4)-beta-D-GlcNAc}-L-asparaginyl-[protein] + UDP + H(+). The enzyme catalyses an N(4)-{beta-D-GlcNAc-(1-&gt;2)-alpha-D-Man-(1-&gt;3)-[beta-D-GlcNAc-(1-&gt;2)-[beta-D-GlcNAc-(1-&gt;6)]-alpha-D-Man-(1-&gt;6)]-beta-D-Man-(1-&gt;4)-beta-D-GlcNAc-(1-&gt;4)-beta-D-GlcNAc}-L-asparaginyl-[protein] + UDP-N-acetyl-alpha-D-glucosamine = an N(4)-{beta-D-GlcNAc-(1-&gt;2)-[beta-D-GlcNAc-(1-&gt;4)]-alpha-D-Man-(1-&gt;3)-[beta-D-GlcNAc-(1-&gt;2)-[beta-D-GlcNAc-(1-&gt;6)]-alpha-D-Man-(1-&gt;6)]-beta-D-Man-(1-&gt;4)-beta-D-GlcNAc-(1-&gt;4)-beta-D-GlcNAc}-L-asparaginyl-[protein] + UDP + H(+). It carries out the reaction an N(4)-{beta-D-GlcNAc-(1-&gt;2)-alpha-D-Man-(1-&gt;3)-[beta-D-GlcNAc-(1-&gt;2)-alpha-D-Man-(1-&gt;6)]-beta-D-Man-(1-&gt;4)-beta-D-GlcNAc-(1-&gt;4)-[alpha-L-Fuc-(1-&gt;6)]-beta-D-GlcNAc}-L-asparaginyl-[protein] + UDP-N-acetyl-alpha-D-glucosamine = N(4)-{beta-D-GlcNAc-(1-&gt;2)-[beta-D-GlcNAc-(1-&gt;4)]-alpha-D-Man-(1-&gt;3)-[beta-D-GlcNAc-(1-&gt;2)-alpha-D-Man-(1-&gt;6)]-beta-D-Man-(1-&gt;4)-beta-D-GlcNAc-(1-&gt;4)-[alpha-L-Fuc-(1-&gt;6)]-beta-D-GlcNAc}-asparaginyl-[protein] + UDP + H(+). The catalysed reaction is an N(4)-{beta-D-GlcNAc-(1-&gt;2)-alpha-D-Man-(1-&gt;3)-[beta-D-Gal-(1-&gt;4)-beta-D-GlcNAc-(1-&gt;2)-alpha-D-Man-(1-&gt;6)]-beta-D-Man-(1-&gt;4)-beta-D-GlcNAc-(1-&gt;4)-beta-D-GlcNAc}-L-asparaginyl-[protein] + UDP-N-acetyl-alpha-D-glucosamine = an N(4)-{beta-D-GlcNAc-(1-&gt;2)-[beta-D-GlcNAc-(1-&gt;4)]-alpha-D-Man-(1-&gt;3)-[beta-D-Gal-(1-&gt;4)-beta-D-GlcNAc-(1-&gt;2)-alpha-D-Man-(1-&gt;6)]-beta-D-Man-(1-&gt;4)-beta-D-GlcNAc-(1-&gt;4)-beta-D-GlcNAc}-L-asparaginyl-[protein] + UDP + H(+). It catalyses the reaction N(4)-{beta-D-GlcNAc-(1-&gt;2)-alpha-D-Man-(1-&gt;3)-[alpha-D-Man-(1-&gt;3)-{alpha-D-Man-(1-&gt;6)}-alpha-D-Man-(1-&gt;6)]-beta-D-Man-(1-&gt;4)-beta-D-GlcNAc-(1-&gt;4)-beta-D-GlcNAc}-asparaginyl-[protein] + UDP-N-acetyl-alpha-D-glucosamine = N(4)-{beta-D-GlcNAc-(1-&gt;2)-[beta-D-GlcNAc-(1-&gt;4)]-alpha-D-Man-(1-&gt;3)-[alpha-D-Man-(1-&gt;3)-{alpha-D-Man-(1-&gt;6)}-alpha-D-Man-(1-&gt;6)]-beta-D-Man-(1-&gt;4)-beta-D-GlcNAc-(1-&gt;4)-beta-D-GlcNAc}-asparaginyl-[protein] + UDP + H(+). The enzyme catalyses N(4)-{beta-D-GlcNAc-(1-&gt;2)-alpha-D-Man-(1-&gt;3)-beta-D-Man-(1-&gt;4)-beta-D-GlcNAc-(1-&gt;4)-beta-D-GlcNAc}-asparaginyl-[protein] + UDP-N-acetyl-alpha-D-glucosamine = N(4)-{beta-D-GlcNAc-(1-&gt;2)-[beta-D-GlcNAc-(1-&gt;4)]-alpha-D-Man-(1-&gt;3)-beta-D-Man-(1-&gt;4)-beta-D-GlcNAc-(1-&gt;4)-beta-D-GlcNAc}-asparaginyl-[protein] + UDP + H(+). It participates in protein modification; protein glycosylation. In terms of biological role, glycosyltransferase that catalyzes the transfer of GlcNAc from UDP-GlcNAc to the GlcNAcbeta1-2Manalpha1-3 arm of the core structure of N-linked glycans through a beta1-4 linkage and participates in the production of tri- and tetra-antennary N-linked sugar chains. Prefers complex-type N-glycans over hybrid-types. Has lower affinities for donors or acceptors than MGAT4A, suggesting that, under physiological conditions, it is not the main contributor in N-glycan biosynthesis. The chain is Alpha-1,3-mannosyl-glycoprotein 4-beta-N-acetylglucosaminyltransferase B from Homo sapiens (Human).